The primary structure comprises 538 residues: Lipid scramblase CLPTM1L (538 aa).

At 1–10 (MWSGRSSFTS) the chain is on the cytoplasmic side. Residues 11–31 (LVVGVFVVYVVHTCWVMYGIV) traverse the membrane as a helical segment. The Extracellular segment spans residues 32–284 (YTRPCSGHGR…VKGIFVDTNL (253 aa)). 2 N-linked (GlcNAc...) asparagine glycosylation sites follow: Asn-91 and Asn-101. A helical membrane pass occupies residues 285–305 (YFLALTFFVAAFHLLFDFLAF). At 306–324 (KNDISFWKKKKSMIGMSTK) the chain is on the cytoplasmic side. Residues 325-341 (AVLWRCFSTVVIFLFLL) traverse the membrane as a helical segment. At 342 to 402 (DEQTSLPVLV…TEEYDAQAMK (61 aa)) the chain is on the extracellular side. A helical transmembrane segment spans residues 403–423 (YLSYLLYPLCIGGAIYSLLNI). Residues 424-428 (KYKSW) are Cytoplasmic-facing. A helical membrane pass occupies residues 429 to 449 (YSWLINSFVNGVYAFGFLFML). Residues 450–538 (PQLFVNYKMK…DTPQRKPHTD (89 aa)) are Extracellular-facing.

This sequence belongs to the CLPTM1 family.

The protein localises to the endoplasmic reticulum membrane. The catalysed reaction is a 6-(alpha-D-glucosaminyl)-1-(1,2-diacyl-sn-glycero-3-phospho)-1D-myo-inositol(in) = a 6-(alpha-D-glucosaminyl)-1-(1,2-diacyl-sn-glycero-3-phospho)-1D-myo-inositol(out). It carries out the reaction 6-(alpha-D-glucosaminyl)-(1-octadecanoyl,2-(9Z)-octadecenoyl-sn-glycero-3-phospho)-1D-myo-inositol(in) = 6-(alpha-D-glucosaminyl)-(1-octadecanoyl,2-(9Z)-octadecenoyl-sn-glycero-3-phospho)-1D-myo-inositol(out). It catalyses the reaction a 1,2-diacyl-sn-glycero-3-phospho-(1D-myo-inositol)(in) = a 1,2-diacyl-sn-glycero-3-phospho-(1D-myo-inositol)(out). The enzyme catalyses a 1,2-diacyl-sn-glycero-3-phosphocholine(in) = a 1,2-diacyl-sn-glycero-3-phosphocholine(out). The catalysed reaction is a 1,2-diacyl-sn-glycero-3-phosphoethanolamine(in) = a 1,2-diacyl-sn-glycero-3-phosphoethanolamine(out). In terms of biological role, scramblase that mediates the translocation of glucosaminylphosphatidylinositol (alpha-D-GlcN-(1-6)-(1,2-diacyl-sn-glycero-3-phospho)-1D-myo-inositol, GlcN-PI) across the endoplasmic reticulum (ER) membrane, from the cytosolic leaflet to the luminal leaflet of the ER membrane, where it participates in the biosynthesis of glycosylphosphatidylinositol (GPI). GPI is a lipid glycoconjugate involved in post-translational modification of proteins. Can also translocate 1,2-diacyl-sn-glycero-3-phospho-(1D-myo-inositol) (phosphatidylinositol or PI), as well as several other phospholipids (1,2-diacyl-sn-glycero-3-phosphocholine, 1,2-diacyl-sn-glycero-3-phosphoethanolamine), and N-acetylglucosaminylphosphatidylinositol (GlcNAc-PI) in vitro. This chain is Lipid scramblase CLPTM1L (CLPTM1L), found in Bos taurus (Bovine).